The sequence spans 377 residues: MLVHQVNTKLCSAKQFTHLAKVVTPALSYQASSVYSANLPRLAASPRLFSTTSSAQLRDFFPVKETEHIRQTPPTWPHHGLTEKEMVDVVPGHRKPRTLGDKFAWSLVRISRWGMDKVSGLSSEQQQINKGSPTTSIVAAKPLTEAQWLSRFIFLESIAAVPGMVAGMLRHLHSLRRLKRDNGWIETLLEEAYNERMHLLTFLKMCEPGWLMKILIIGAQGVYFNAMFVAYLISPKICHRFVGYLEEEAVHTYTRSIEELERGDLPKWSDPKFQVPEIAVSYWGMPEGHRTMRDLLLYIRADEANHRGVHHTLGNLNQVEDPNPFVSDYKGDKPRPVAASRPEGFEREEVIGKEVIGKEVIEKDVIGKEVLGKQVSV.

Residues 149–169 form a helical membrane-spanning segment; that stretch reads LSRFIFLESIAAVPGMVAGML. 3 residues coordinate Fe cation: E156, E195, and H198. The chain crosses the membrane as a helical span at residues 214 to 234; the sequence is ILIIGAQGVYFNAMFVAYLIS. E246, E303, and H306 together coordinate Fe cation.

It belongs to the alternative oxidase family. Fe cation serves as cofactor.

The protein resides in the mitochondrion inner membrane. Functionally, catalyzes cyanide-resistant oxygen consumption. May increase respiration when the cytochrome respiratory pathway is restricted, or in response to low temperatures. The sequence is that of Alternative oxidase, mitochondrial (AOX1) from Pyricularia oryzae (strain 70-15 / ATCC MYA-4617 / FGSC 8958) (Rice blast fungus).